Consider the following 193-residue polypeptide: Interleukin-18 (193 aa).

A propeptide spanning residues M1–D36 is cleaved from the precursor.

Belongs to the IL-1 family. As to quaternary structure, forms a ternary complex with ligand-binding receptor subunit IL18R1 and signaling receptor subunit IL18RAP at the plasma membrane. Mature IL18 first binds to IL18R1 forming a low affinity binary complex, which then interacts with IL18RAP to form a high affinity ternary complex that signals inside the cell. Interacts with cargo receptor TMED10; the interaction mediates the translocation from the cytoplasm into the ERGIC (endoplasmic reticulum-Golgi intermediate compartment) and thereby secretion. In terms of processing, the pro-IL-18 precursor is processed by CASP1, CASP4 or CASP5 to yield its mature, active form. The pro-IL-18 precursor features autoinhibitory interactions between the propeptide and the post-cleavage-site region, preventing recognition by the IL18R1 receptor. Processing by CASP1, CASP4 or CASP5 induces conformational changes to generate critical receptor-binding sites. The mature form is then secreted and released in the extracellular milieu by passing through the gasdermin-D (GSDMD) pore. In contrast, cleavage by CASP3 inactivates IL18.

The protein localises to the cytoplasm. Its subcellular location is the cytosol. It is found in the secreted. In terms of biological role, pro-inflammatory cytokine primarily involved in epithelial barrier repair, polarized T-helper 1 (Th1) cell and natural killer (NK) cell immune responses. Upon binding to IL18R1 and IL18RAP, forms a signaling ternary complex which activates NF-kappa-B, triggering synthesis of inflammatory mediators. Synergizes with IL12/interleukin-12 to induce IFNG synthesis from T-helper 1 (Th1) cells and natural killer (NK) cells. Involved in transduction of inflammation downstream of pyroptosis: its mature form is specifically released in the extracellular milieu by passing through the gasdermin-D (GSDMD) pore. This chain is Interleukin-18 (IL18), found in Bos taurus (Bovine).